A 288-amino-acid polypeptide reads, in one-letter code: Protoheme IX farnesyltransferase 2 (288 aa).

A run of 9 helical transmembrane segments spans residues isoleucine 8–alanine 28, leucine 36–valine 56, valine 85–valine 105, leucine 108–tyrosine 128, asparagine 131–tyrosine 151, leucine 152–tryptophan 172, alanine 211–tyrosine 231, tyrosine 233–isoleucine 252, and valine 267–alanine 287.

It belongs to the UbiA prenyltransferase family. Protoheme IX farnesyltransferase subfamily.

Its subcellular location is the cell inner membrane. The enzyme catalyses heme b + (2E,6E)-farnesyl diphosphate + H2O = Fe(II)-heme o + diphosphate. Its pathway is porphyrin-containing compound metabolism; heme O biosynthesis; heme O from protoheme: step 1/1. Functionally, converts heme B (protoheme IX) to heme O by substitution of the vinyl group on carbon 2 of heme B porphyrin ring with a hydroxyethyl farnesyl side group. In Vibrio parahaemolyticus serotype O3:K6 (strain RIMD 2210633), this protein is Protoheme IX farnesyltransferase 2.